The following is a 208-amino-acid chain: Sexual inducer glycoprotein (208 aa).

The N-terminal stretch at 1–11 (MAVVVVNSATA) is a signal peptide. N-linked (GlcNAc...) asparagine glycans are attached at residues asparagine 89, asparagine 119, asparagine 131, asparagine 139, asparagine 146, and asparagine 188.

Functionally, the sexual inducer is a glycoprotein synthesized and released by sexual males at about the time they release sperm packets. It is one of the most potent biological effector molecules known: it exhibits full effectiveness in converting asexually growing males and females to the sexual pathway at about 10(-7) m. This chain is Sexual inducer glycoprotein, found in Volvox carteri (Green alga).